The chain runs to 585 residues: Pyruvate kinase (585 aa).

Arginine 32 is a substrate binding site. 4 residues coordinate K(+): asparagine 34, serine 36, aspartate 66, and threonine 67. ATP is bound at residue asparagine 34–histidine 37. ATP contacts are provided by arginine 73 and lysine 156. Glutamate 221 is a Mg(2+) binding site. Substrate-binding residues include glycine 244, aspartate 245, and threonine 277. Aspartate 245 is a binding site for Mg(2+).

This sequence belongs to the pyruvate kinase family. It in the C-terminal section; belongs to the PEP-utilizing enzyme family. The cofactor is Mg(2+). Requires K(+) as cofactor.

The catalysed reaction is pyruvate + ATP = phosphoenolpyruvate + ADP + H(+). Its pathway is carbohydrate degradation; glycolysis; pyruvate from D-glyceraldehyde 3-phosphate: step 5/5. The polypeptide is Pyruvate kinase (pyk) (Staphylococcus epidermidis (strain ATCC 35984 / DSM 28319 / BCRC 17069 / CCUG 31568 / BM 3577 / RP62A)).